Reading from the N-terminus, the 188-residue chain is Protein GrpE (188 aa).

The protein belongs to the GrpE family. Homodimer.

The protein resides in the cytoplasm. In terms of biological role, participates actively in the response to hyperosmotic and heat shock by preventing the aggregation of stress-denatured proteins, in association with DnaK and GrpE. It is the nucleotide exchange factor for DnaK and may function as a thermosensor. Unfolded proteins bind initially to DnaJ; upon interaction with the DnaJ-bound protein, DnaK hydrolyzes its bound ATP, resulting in the formation of a stable complex. GrpE releases ADP from DnaK; ATP binding to DnaK triggers the release of the substrate protein, thus completing the reaction cycle. Several rounds of ATP-dependent interactions between DnaJ, DnaK and GrpE are required for fully efficient folding. This is Protein GrpE from Chromobacterium violaceum (strain ATCC 12472 / DSM 30191 / JCM 1249 / CCUG 213 / NBRC 12614 / NCIMB 9131 / NCTC 9757 / MK).